Here is a 1059-residue protein sequence, read N- to C-terminus: Mitogen-activated protein kinase kinase kinase mlk-1 (1059 aa).

The disordered stretch occupies residues 1–66; the sequence is MEQASVPSYV…ESSQVSRESP (66 aa). Residues 38–48 are compositionally biased toward low complexity; it reads DTTTASTSTDS. In terms of domain architecture, SH3 spans 69–130; it reads RASKAFVASY…PSNYAREVTY (62 aa). Residues 150-454 form the Protein kinase domain; the sequence is TLSDCQIGHG…TLAISFKQYA (305 aa). Residues 156–164 and Lys-193 contribute to the ATP site; that span reads IGHGATATV. Positions 199-224 form a coiled coil; sequence ASNFRADVVSTDEQLEQLKREANLVN. Asp-297 acts as the Proton acceptor in catalysis. Ser-355 carries the post-translational modification Phosphoserine; by max-2 and tpa-1. Disordered stretches follow at residues 617–699 and 714–808; these read PVVS…QTTR and RAQS…SSSD. Polar residues predominate over residues 623–633; that stretch reads MDDSNTFSTID. Composition is skewed to basic and acidic residues over residues 639–648 and 662–674; these read DPNHSKESKK and NKRDSKEDHDERA. Positions 678–689 are enriched in low complexity; the sequence is SISSRSSSTTSS. Polar residues predominate over residues 690 to 699; it reads NRLITGQTTR. Over residues 749–759 the composition is skewed to basic and acidic residues; the sequence is RYVKDLEKDTP. 2 stretches are compositionally biased toward polar residues: residues 774–790 and 798–808; these read LDQTIPASPNSPDSINN and SRRTTANSSSD. Residues 937–940 carry the NPQY motif motif; the sequence is NPQY. At Tyr-940 the chain carries Phosphotyrosine.

It belongs to the protein kinase superfamily. STE Ser/Thr protein kinase family. MAP kinase kinase kinase subfamily. Interacts with max-2; the interaction is independent of max-2 and mlk-1 kinase activities. May interact (via NPQY motif when phosphorylated on tyrosine residue) with shc-1 (via PID domain); the interaction may facilitate mek-1 phosphorylation by bringing mlk-1 and mek-1 together. Interacts with svh-2 (via cytoplasmic domain). Interacts with tpa-1. Requires Mg(2+) as cofactor. In terms of processing, may be phosphorylated on tyrosine residues by svh-2. Post-translationally, may be ubiquitinated and targeted for proteasomal degradation by E3 ubiquitin ligase rpm-1. Expressed in pharynx, intestine, hypodermis, neurons and body muscles.

It carries out the reaction L-seryl-[protein] + ATP = O-phospho-L-seryl-[protein] + ADP + H(+). The enzyme catalyses L-threonyl-[protein] + ATP = O-phospho-L-threonyl-[protein] + ADP + H(+). With respect to regulation, activated by phosphorylation at Ser-355. May be activated by svh-2-mediated phosphorylation. In terms of biological role, serine/threonine-protein kinase which, by phosphorylating and activating mek-1, plays an important role in the activation of the JNK pathway composed of mlk-1, mek-1 and kgb-1. Involved in the response to environmental stress such as heavy metals. By activating the JNK pathway downstream of tyrosine receptor svh-2, plays a role in axon regeneration after injury. In Caenorhabditis elegans, this protein is Mitogen-activated protein kinase kinase kinase mlk-1.